Here is a 385-residue protein sequence, read N- to C-terminus: ATP phosphoribosyltransferase regulatory subunit (385 aa).

The protein belongs to the class-II aminoacyl-tRNA synthetase family. HisZ subfamily. As to quaternary structure, heteromultimer composed of HisG and HisZ subunits.

It is found in the cytoplasm. Its pathway is amino-acid biosynthesis; L-histidine biosynthesis; L-histidine from 5-phospho-alpha-D-ribose 1-diphosphate: step 1/9. Functionally, required for the first step of histidine biosynthesis. May allow the feedback regulation of ATP phosphoribosyltransferase activity by histidine. In Lysinibacillus sphaericus (strain C3-41), this protein is ATP phosphoribosyltransferase regulatory subunit.